We begin with the raw amino-acid sequence, 563 residues long: Serine/threonine-protein kinase WNK8 (563 aa).

The 258-residue stretch at 29–286 (IRYDDVLGRG…ALELSKDPFL (258 aa)) folds into the Protein kinase domain. Residues 109 to 112 (TELF) and Lys159 each bind ATP. The Proton acceptor role is filled by Asp176. Residues 426-436 (TSSHHNQNSPR) show a composition bias toward polar residues. A disordered region spans residues 426-459 (TSSHHNQNSPRLTHEDHEAANQQTVNSKDEEAAG). At Ser509 the chain carries Phosphoserine.

Belongs to the protein kinase superfamily. Ser/Thr protein kinase family. WNK subfamily. Interacts with RGS1 and GB1, but not with GPA1. The association with RGS1 at the plasma membrane is triggered by induction of glucose. Binds to EDM2 in nucleus. Autophosphorylated.

The protein localises to the nucleus. The catalysed reaction is L-seryl-[protein] + ATP = O-phospho-L-seryl-[protein] + ADP + H(+). The enzyme catalyses L-threonyl-[protein] + ATP = O-phospho-L-threonyl-[protein] + ADP + H(+). Its function is as follows. Regulates flowering time by modulating the photoperiod pathway. Phosphorylates the vacuolar ATPase subunit C (VATC) and RGS1. Regulates EDM2 that, in turn, modulates development processes. The protein is Serine/threonine-protein kinase WNK8 (WNK8) of Arabidopsis thaliana (Mouse-ear cress).